Reading from the N-terminus, the 400-residue chain is Inosine-5'-monophosphate dehydrogenase (400 aa).

A compositionally biased stretch (basic and acidic residues) spans 96–116; it reads KNESTPDQNLDKESTDGKDTK. The interval 96–125 is disordered; that stretch reads KNESTPDQNLDKESTDGKDTKSNNNIDAYS. Residues D163 and 212–214 each bind NAD(+); that span reads GIG. 2 residues coordinate K(+): G214 and G216. IMP is bound at residue S217. Residue C219 participates in K(+) binding. The Thioimidate intermediate role is filled by C219. IMP contacts are provided by residues 252-254, 275-276, and 299-303; these read DGG, GS, and YRGMG. The Proton acceptor role is filled by R315. Residue E329 coordinates IMP. Residues E383, S384, and H385 each coordinate K(+).

The protein belongs to the IMPDH/GMPR family. In terms of assembly, homotetramer. K(+) serves as cofactor.

The protein localises to the cytoplasm. The catalysed reaction is IMP + NAD(+) + H2O = XMP + NADH + H(+). Its pathway is purine metabolism; XMP biosynthesis via de novo pathway; XMP from IMP: step 1/1. Mycophenolic acid (MPA) is a non-competitive inhibitor that prevents formation of the closed enzyme conformation by binding to the same site as the amobile flap. In contrast, mizoribine monophosphate (MZP) is a competitive inhibitor that induces the closed conformation. MPA is a potent inhibitor of mammalian IMPDHs but a poor inhibitor of the bacterial enzymes. MZP is a more potent inhibitor of bacterial IMPDH. Resistant to mycophenolic acid (MPA) inhibition. Functionally, catalyzes the conversion of inosine 5'-phosphate (IMP) to xanthosine 5'-phosphate (XMP), the first committed and rate-limiting step in the de novo synthesis of guanine nucleotides, and therefore plays an important role in the regulation of cell growth. This is Inosine-5'-monophosphate dehydrogenase from Cryptosporidium parvum.